The sequence spans 364 residues: Peptidyl-prolyl cis-trans isomerase D (364 aa).

One can recognise a PPIase cyclophilin-type domain in the interval 7–170 (YFDITIGNKP…EDAVIAKCGE (164 aa)). TPR repeat units lie at residues 208 to 241 (ATHL…LNEK), 261 to 294 (IPCY…DSKY), and 301 to 334 (TKAY…DPED).

The protein belongs to the cyclophilin-type PPIase family. PPIase D subfamily.

It is found in the cytoplasm. It catalyses the reaction [protein]-peptidylproline (omega=180) = [protein]-peptidylproline (omega=0). In terms of biological role, PPIases accelerate the folding of proteins. It catalyzes the cis-trans isomerization of proline imidic peptide bonds in oligopeptides. The chain is Peptidyl-prolyl cis-trans isomerase D (cyp12) from Rhizopus delemar (strain RA 99-880 / ATCC MYA-4621 / FGSC 9543 / NRRL 43880) (Mucormycosis agent).